The primary structure comprises 292 residues: MPSLKDLRNRIASVKATQKITKAMQMVAAAKLRRAQEAAEAARPYSQRMGAVLANIAQNVSGEDAPALMVGTGKDDVHLLVVCTAERGLCGGFNSQIARLARDHARKLLAEGKTVKIITVGKKGADILRREFSALLHDHVDLREVKQLAFVHADQIGHKIIKLFEEGAFDVCTLFYSEFKSVISQVPTAQQLIPASADNEAEMETAGDAIYEYEPDPAAILSTLIPRNISVQIFRALLENVAGEMGAKMSAMDNATRNAGDMINKLSITYNRQRQAQITKELIEIISGAEAL.

This sequence belongs to the ATPase gamma chain family. As to quaternary structure, F-type ATPases have 2 components, CF(1) - the catalytic core - and CF(0) - the membrane proton channel. CF(1) has five subunits: alpha(3), beta(3), gamma(1), delta(1), epsilon(1). CF(0) has three main subunits: a, b and c.

The protein resides in the cell inner membrane. Its function is as follows. Produces ATP from ADP in the presence of a proton gradient across the membrane. The gamma chain is believed to be important in regulating ATPase activity and the flow of protons through the CF(0) complex. In Brucella ovis (strain ATCC 25840 / 63/290 / NCTC 10512), this protein is ATP synthase gamma chain.